The chain runs to 247 residues: MDAFSSFFDSQPGSRSWSYDSLKNFRQISPAVQNHLKRVYLTLCCALVASAFGAYLHVLWNIGGILTTIGCIGTMIWLLSCPPYEHQKRLSLLFVSAVLEGASVGPLIKVAIDVDPSILITAFVGTAIAFVCFSAAAMLARRREYLYLGGLLSSGLSMLMWLQFASSIFGGSASIFKFELYFGLLIFVGYMVVDTQEIIEKAHLGDMDYVKHSLTLFTDFVAVFVRILIIMLKNSADKEEKKKKRRN.

Position 1 is an N-acetylmethionine (Met1). A run of 6 helical transmembrane segments spans residues 58-78 (VLWN…MIWL), 92-112 (LLFV…KVAI), 118-138 (ILIT…AAAM), 145-165 (YLYL…LQFA), 173-193 (ASIF…YMVV), and 212-232 (HSLT…IIML).

Belongs to the BI1 family. Interacts (via C-terminus) with calmodulin, CYTB5-B and CYTB5-D. Interacts indirectly with FAH1 via CYTB5-D. As to expression, expressed in root tips, root vasculature, flower tissues, including stamens and sepals, and in the base of siliques. Not detected in mature leaves.

Its subcellular location is the endoplasmic reticulum membrane. Suppressor of apoptosis. Modulator of endoplasmic reticulum stress-mediated programmed cell death. Involved in methyl jasmonate-induced leaf senescence through regulating cytoplasmic calcium level. The sequence is that of Bax inhibitor 1 (BI-1) from Arabidopsis thaliana (Mouse-ear cress).